We begin with the raw amino-acid sequence, 400 residues long: Argininosuccinate synthase (400 aa).

8-16 is a binding site for ATP; sequence AYSGGLDTS. L-citrulline contacts are provided by Tyr-86 and Ser-91. ATP is bound at residue Gly-116. L-aspartate is bound by residues Thr-118, Asn-122, and Asp-123. Residue Asn-122 participates in L-citrulline binding. L-citrulline is bound by residues Arg-126, Ser-175, Ser-184, Glu-260, and Tyr-272.

Belongs to the argininosuccinate synthase family. Type 1 subfamily. As to quaternary structure, homotetramer.

The protein resides in the cytoplasm. The enzyme catalyses L-citrulline + L-aspartate + ATP = 2-(N(omega)-L-arginino)succinate + AMP + diphosphate + H(+). The protein operates within amino-acid biosynthesis; L-arginine biosynthesis; L-arginine from L-ornithine and carbamoyl phosphate: step 2/3. This is Argininosuccinate synthase from Clostridium acetobutylicum (strain ATCC 824 / DSM 792 / JCM 1419 / IAM 19013 / LMG 5710 / NBRC 13948 / NRRL B-527 / VKM B-1787 / 2291 / W).